The primary structure comprises 160 residues: Thebaine synthase 2 (160 aa).

Position 74 (Ser-74) interacts with thebaine. Residue His-89 is the Proton acceptor of the active site. A thebaine-binding site is contributed by Thr-105.

This sequence belongs to the MLP family. Homodimer (allosteric) and oligomers. In terms of tissue distribution, expressed in poppy latex.

The catalysed reaction is (7S)-O-acetylsalutaridinol = thebaine + acetate + H(+). It functions in the pathway alkaloid biosynthesis; morphine biosynthesis. With respect to regulation, slightly inhibited by salutaridine and (7S)-salutaridinol. Its function is as follows. Catalyzes the formation of thebaine from (7S)-salutaridinol 7-O-acetate at the expense of labile hydroxylated by-products, which are preferentially produced by spontaneous allylic elimination. No visible activity toward (7S)-salutaridinol (at pH 7). This chain is Thebaine synthase 2, found in Papaver somniferum (Opium poppy).